The sequence spans 360 residues: 3-dehydroquinate synthase (360 aa).

NAD(+) is bound by residues 70–75 (DGEKYK), 104–108 (GVIGD), 128–129 (TT), K141, and K150. Zn(2+)-binding residues include E183, H246, and H263.

Belongs to the sugar phosphate cyclases superfamily. Dehydroquinate synthase family. Co(2+) serves as cofactor. The cofactor is Zn(2+). NAD(+) is required as a cofactor.

The protein resides in the cytoplasm. It catalyses the reaction 7-phospho-2-dehydro-3-deoxy-D-arabino-heptonate = 3-dehydroquinate + phosphate. The protein operates within metabolic intermediate biosynthesis; chorismate biosynthesis; chorismate from D-erythrose 4-phosphate and phosphoenolpyruvate: step 2/7. Functionally, catalyzes the conversion of 3-deoxy-D-arabino-heptulosonate 7-phosphate (DAHP) to dehydroquinate (DHQ). The polypeptide is 3-dehydroquinate synthase (Acinetobacter baumannii (strain SDF)).